We begin with the raw amino-acid sequence, 241 residues long: Outer membrane protein assembly factor BamD (241 aa).

The N-terminal stretch at 1–17 (MKYQTLSGLLALSLLFG) is a signal peptide. C18 carries N-palmitoyl cysteine lipidation. C18 carries the S-diacylglycerol cysteine lipid modification.

The protein belongs to the BamD family. As to quaternary structure, part of the Bam complex.

It is found in the cell outer membrane. In terms of biological role, part of the outer membrane protein assembly complex, which is involved in assembly and insertion of beta-barrel proteins into the outer membrane. The protein is Outer membrane protein assembly factor BamD of Vibrio cholerae serotype O1 (strain ATCC 39315 / El Tor Inaba N16961).